The sequence spans 101 residues: Large ribosomal subunit protein bL20 (101 aa).

It belongs to the bacterial ribosomal protein bL20 family.

Its function is as follows. Binds directly to 23S ribosomal RNA and is necessary for the in vitro assembly process of the 50S ribosomal subunit. It is not involved in the protein synthesizing functions of that subunit. This chain is Large ribosomal subunit protein bL20 (rplT), found in Carsonella ruddii (strain PV).